The following is a 56-amino-acid chain: Ovomucoid (56 aa).

The Kazal-like domain maps to 6-56; that stretch reads VDCSDHPKPACLQEQKPLCGSDNKTYDNKCSFCNAVVDSNGTLTLSHFGKC. Intrachain disulfides connect Cys-8-Cys-38, Cys-16-Cys-35, and Cys-24-Cys-56. Asn-45 carries N-linked (GlcNAc...) asparagine glycosylation.

Its subcellular location is the secreted. The polypeptide is Ovomucoid (Pipile pipile (Trinidad piping guan)).